Reading from the N-terminus, the 432-residue chain is Monoacylglycerol lipase ABHD2 (432 aa).

Topologically, residues 1-14 (MNTHESEVYTVAPE) are cytoplasmic. The chain crosses the membrane as a helical; Signal-anchor for type II membrane protein span at residues 15-35 (MPAMFDGMKLAAVATVLYVIV). The Extracellular segment spans residues 36–432 (RCLNLKSPTA…NQTTCQENTS (397 aa)). An AB hydrolase-1 domain is found at 132–383 (TMVICPGIGN…HGGHLGFFEG (252 aa)). N-linked (GlcNAc...) asparagine glycosylation occurs at Asn141. Ser212 (nucleophile) is an active-site residue. A glycan (N-linked (GlcNAc...) asparagine) is linked at Asn225. Residues Asp346 and His377 each act as charge relay system in the active site. The tract at residues 413 to 432 (PPCQSKDAQSNQTTCQENTS) is disordered. Positions 418–432 (KDAQSNQTTCQENTS) are enriched in polar residues. Asn423 carries N-linked (GlcNAc...) asparagine glycosylation.

This sequence belongs to the AB hydrolase superfamily. AB hydrolase 4 family.

Its subcellular location is the cell membrane. It carries out the reaction Hydrolyzes glycerol monoesters of long-chain fatty acids.. The enzyme catalyses an acetyl ester + H2O = an aliphatic alcohol + acetate + H(+). The catalysed reaction is a triacylglycerol + H2O = a diacylglycerol + a fatty acid + H(+). It catalyses the reaction 2-(5Z,8Z,11Z,14Z-eicosatetraenoyl)-glycerol + H2O = glycerol + (5Z,8Z,11Z,14Z)-eicosatetraenoate + H(+). It carries out the reaction a butanoate ester + H2O = an aliphatic alcohol + butanoate + H(+). The enzyme catalyses hexadecanoate ester + H2O = an aliphatic alcohol + hexadecanoate + H(+). Acylglycerol lipase activity is activated upon binding to progesterone. Functionally, progesterone-dependent acylglycerol lipase that catalyzes hydrolysis of endocannabinoid arachidonoylglycerol (AG) from cell membrane. Acts as a progesterone receptor: progesterone-binding activates the acylglycerol lipase activity, mediating degradation of 1-arachidonoylglycerol (1AG) and 2-arachidonoylglycerol (2AG) to glycerol and arachidonic acid (AA). Also displays an ester hydrolase activity against acetyl ester, butanoate ester and hexadecanoate ester. Plays a key role in sperm capacitation in response to progesterone by mediating degradation of 2AG, an inhibitor of the sperm calcium channel CatSper, leading to calcium influx via CatSper and sperm activation. May also play a role in smooth muscle cells migration. In Danio rerio (Zebrafish), this protein is Monoacylglycerol lipase ABHD2 (abhd2a).